The primary structure comprises 298 residues: Acetylglutamate kinase (298 aa).

Residues 67–68 (GG), R89, and N193 each bind substrate.

It belongs to the acetylglutamate kinase family. ArgB subfamily.

The protein resides in the cytoplasm. The enzyme catalyses N-acetyl-L-glutamate + ATP = N-acetyl-L-glutamyl 5-phosphate + ADP. It functions in the pathway amino-acid biosynthesis; L-arginine biosynthesis; N(2)-acetyl-L-ornithine from L-glutamate: step 2/4. Functionally, catalyzes the ATP-dependent phosphorylation of N-acetyl-L-glutamate. The sequence is that of Acetylglutamate kinase from Desulfitobacterium hafniense (strain DSM 10664 / DCB-2).